The sequence spans 1080 residues: Ubiquitin-activating enzyme E1 1 (1080 aa).

Basic and acidic residues predominate over residues 1–14 (MLHKRASEANDKND). Disordered stretches follow at residues 1–20 (MLHK…IIGS) and 29–50 (RIDF…GSSR). Low complexity predominate over residues 38-49 (DKSSSILASGSS). Residues Ala502, Asp528, Arg539, Lys552, and 600-601 (DN) each bind ATP. The active-site Glycyl thioester intermediate is Cys656.

Belongs to the ubiquitin-activating E1 family. Monomer. As to expression, expressed in leaves, flowers, roots and stems. Detected in germinating seeds, cotyledons, hypocotyls, vascular tissues, anthers, filaments, pollen, style, stigma, sepals, petals, ovary, developing ovules, funiculi and silique walls.

It carries out the reaction ATP + ubiquitin + [E1 ubiquitin-activating enzyme]-L-cysteine = AMP + diphosphate + S-ubiquitinyl-[E1 ubiquitin-activating enzyme]-L-cysteine.. The protein operates within protein modification; protein ubiquitination. Functionally, activates ubiquitin by first adenylating its C-terminal glycine residue with ATP, and thereafter linking this residue to the side chain of a cysteine residue in E1, yielding a ubiquitin-E1 thioester and free AMP. This Arabidopsis thaliana (Mouse-ear cress) protein is Ubiquitin-activating enzyme E1 1 (UBA1).